A 45-amino-acid chain; its full sequence is uncharacterized protein (45 aa).

A helical transmembrane segment spans residues 5 to 25; sequence IFFIFALSGILAACTVGGGVS.

It localises to the membrane. This is an uncharacterized protein from Haemophilus influenzae (strain ATCC 51907 / DSM 11121 / KW20 / Rd).